A 70-amino-acid chain; its full sequence is U2-agatoxin-Ao1a (70 aa).

Positions 1-20 are cleaved as a signal peptide; the sequence is MRAIISLFLISAMVFSMIQA. A propeptide spanning residues 21-34 is cleaved from the precursor; it reads VPEEEGLQLSEDER. 3 disulfides stabilise this stretch: Cys-37-Cys-53, Cys-44-Cys-58, and Cys-52-Cys-68. Position 69 is a leucine amide (Leu-69).

Belongs to the neurotoxin 01 (U2-agtx) family. Expressed by the venom gland.

The protein resides in the secreted. Insect active toxin causing rapid but reversible paralysis in crickets. No activity shown in mammals. Suppresses the excitatory postsynaptic potentials evoked in lobster neuromuscular synaptic preparations, possibly by blocking the presynaptic calcium channel. Induces instantaneous reversible paralysis when injected into crickets. Does not show effect on mammalian Cav2.1/CACNA1A, Cav2.2/CACNA1B and Cav2.3/CACNA1E. This is U2-agatoxin-Ao1a from Agelena orientalis (Funnel-web spider).